Reading from the N-terminus, the 453-residue chain is MFARVFKAMPARASALTSVNASIPARFMATVRQQRPAHERATFTIRDGPIFHGKSFGARTNISGEAVFTTSLVGYPESLTDPSYRGQILVFTQPLIGNYGVPSAERDEHGLLKYFESPNLQAAGVVVADVAEQYSHWTAVESLGEWCAREGVPAISGVDTRAIVTYLRERGSSLARITVGEEYDADQDEAFTDPEQIHLVRQVSTKAPFHVSAADPQCHVAVIDCGVKENILRSLVSRGAGITVFPFDYPIHKVAHHFDGVFISNGPGDPTHCQETTYHLRRLMETSQVPIFGICLGHQLLALAAGARTIKLKYGNRAHNIPALDLSTGRCHITSQNHGYAVDASTLPSDWKPYFVNLNDSSNEGMIHKSRPIFSTQFHPEAKGGPLDSSYLFDIYIDSVKKYKASQAAFYPQRDSLPSPLLVDLLAKERVGVQPTIGMQNIAAAATAAAAAA.

The transit peptide at 1–28 (MFARVFKAMPARASALTSVNASIPARFM) directs the protein to the mitochondrion. The region spanning 219-406 (HVAVIDCGVK…IDSVKKYKAS (188 aa)) is the Glutamine amidotransferase type-1 domain. C295 (nucleophile) is an active-site residue. Residues H379 and E381 contribute to the active site.

This sequence belongs to the CarA family. In terms of assembly, heterodimer composed of 2 chains; the small (or glutamine) chain promotes the hydrolysis of glutamine to ammonia, which is used by the large (or ammonia) chain to synthesize carbamoyl phosphate.

It is found in the mitochondrion matrix. It carries out the reaction hydrogencarbonate + L-glutamine + 2 ATP + H2O = carbamoyl phosphate + L-glutamate + 2 ADP + phosphate + 2 H(+). It catalyses the reaction L-glutamine + H2O = L-glutamate + NH4(+). It participates in amino-acid biosynthesis; L-arginine biosynthesis; carbamoyl phosphate from bicarbonate: step 1/1. Small subunit of the arginine-specific carbamoyl phosphate synthase (CPSase). CPSase catalyzes the formation of carbamoyl phosphate from the ammonia moiety of glutamine, carbonate, and phosphate donated by ATP, the first step of the arginine biosynthetic pathway. The small subunit (glutamine amidotransferase) binds and cleaves glutamine to supply the large subunit with the substrate ammonia. This is Carbamoyl phosphate synthase arginine-specific small chain (cpa1) from Aspergillus fumigatus (strain ATCC MYA-4609 / CBS 101355 / FGSC A1100 / Af293) (Neosartorya fumigata).